Reading from the N-terminus, the 514-residue chain is ATP synthase subunit alpha 2 (514 aa).

170 to 177 (GDRQTGKT) is a binding site for ATP.

The protein belongs to the ATPase alpha/beta chains family. As to quaternary structure, F-type ATPases have 2 components, CF(1) - the catalytic core - and CF(0) - the membrane proton channel. CF(1) has five subunits: alpha(3), beta(3), gamma(1), delta(1), epsilon(1). CF(0) has three main subunits: a(1), b(2) and c(9-12). The alpha and beta chains form an alternating ring which encloses part of the gamma chain. CF(1) is attached to CF(0) by a central stalk formed by the gamma and epsilon chains, while a peripheral stalk is formed by the delta and b chains.

It is found in the cell inner membrane. The enzyme catalyses ATP + H2O + 4 H(+)(in) = ADP + phosphate + 5 H(+)(out). Produces ATP from ADP in the presence of a proton gradient across the membrane. The alpha chain is a regulatory subunit. In Hahella chejuensis (strain KCTC 2396), this protein is ATP synthase subunit alpha 2.